A 237-amino-acid polypeptide reads, in one-letter code: Ribonuclease PH (237 aa).

Phosphate contacts are provided by residues Arg-86 and Gly-124–Arg-126.

It belongs to the RNase PH family. In terms of assembly, homohexameric ring arranged as a trimer of dimers.

It catalyses the reaction tRNA(n+1) + phosphate = tRNA(n) + a ribonucleoside 5'-diphosphate. Functionally, phosphorolytic 3'-5' exoribonuclease that plays an important role in tRNA 3'-end maturation. Removes nucleotide residues following the 3'-CCA terminus of tRNAs; can also add nucleotides to the ends of RNA molecules by using nucleoside diphosphates as substrates, but this may not be physiologically important. Probably plays a role in initiation of 16S rRNA degradation (leading to ribosome degradation) during starvation. The protein is Ribonuclease PH of Xanthobacter autotrophicus (strain ATCC BAA-1158 / Py2).